The following is a 123-amino-acid chain: Class I hydrophobin pri2 (123 aa).

A signal peptide spans M1–A18. Cystine bridges form between C31–C102, C38–C96, C39–C84, and C103–C116. Residues N33 and N40 are each glycosylated (N-linked (GlcNAc...) asparagine).

The protein belongs to the fungal hydrophobin family. In terms of assembly, self-assembles to form functional amyloid fibrils called rodlets. Self-assembly into fibrillar rodlets occurs spontaneously at hydrophobic:hydrophilic interfaces and the rodlets further associate laterally to form amphipathic monolayers.

The protein localises to the secreted. It localises to the cell wall. In terms of biological role, aerial growth, conidiation, and dispersal of filamentous fungi in the environment rely upon a capability of their secreting small amphipathic proteins called hydrophobins (HPBs) with low sequence identity. Class I can self-assemble into an outermost layer of rodlet bundles on aerial cell surfaces, conferring cellular hydrophobicity that supports fungal growth, development and dispersal; whereas Class II form highly ordered films at water-air interfaces through intermolecular interactions but contribute nothing to the rodlet structure. This chain is Class I hydrophobin pri2, found in Cyclocybe aegerita (Black poplar mushroom).